Consider the following 125-residue polypeptide: Glutamyl-tRNA(Gln) amidotransferase subunit C, mitochondrial (125 aa).

Belongs to the GatC family. As to quaternary structure, subunit of the heterotrimeric GatCAB amidotransferase (AdT) complex, composed of A, B and C subunits.

Its subcellular location is the mitochondrion. The enzyme catalyses L-glutamyl-tRNA(Gln) + L-glutamine + ATP + H2O = L-glutaminyl-tRNA(Gln) + L-glutamate + ADP + phosphate + H(+). In terms of biological role, allows the formation of correctly charged Gln-tRNA(Gln) through the transamidation of misacylated Glu-tRNA(Gln) in the mitochondria. The reaction takes place in the presence of glutamine and ATP through an activated gamma-phospho-Glu-tRNA(Gln). This Drosophila mojavensis (Fruit fly) protein is Glutamyl-tRNA(Gln) amidotransferase subunit C, mitochondrial.